The sequence spans 567 residues: Protein NRT1/ PTR FAMILY 4.5 (567 aa).

12 helical membrane passes run 30–50 (GMLA…AFLA), 70–92 (SSSE…GFLA), 99–118 (FVIF…LLTI), 147–167 (AFLF…KGSL), 189–209 (FFNY…TFVV), 219–239 (WGFG…LLGS), 326–346 (IVLK…CLAQ), 374–394 (VFPV…IIPF), 411–431 (IGVG…VELK), 448–468 (LPIT…ADLF), 491–511 (SLSW…VPIV), and 535–555 (LFYW…LFWA).

It belongs to the major facilitator superfamily. Proton-dependent oligopeptide transporter (POT/PTR) (TC 2.A.17) family. As to expression, expressed in flowers and siliques.

Its subcellular location is the membrane. Its function is as follows. Involved in abscisic acid transport. This chain is Protein NRT1/ PTR FAMILY 4.5 (NPF4.5), found in Arabidopsis thaliana (Mouse-ear cress).